Here is a 670-residue protein sequence, read N- to C-terminus: DNA ligase (670 aa).

Residues 33-37 (DAEYD), 82-83 (SL), and E114 contribute to the NAD(+) site. Residue K116 is the N6-AMP-lysine intermediate of the active site. The NAD(+) site is built by R137, E174, K291, and K315. Residues C409, C412, C427, and C433 each coordinate Zn(2+). The 78-residue stretch at 593–670 (GAELPLEGKT…TEQDLLELIN (78 aa)) folds into the BRCT domain.

This sequence belongs to the NAD-dependent DNA ligase family. LigA subfamily. The cofactor is Mg(2+). Requires Mn(2+) as cofactor.

The enzyme catalyses NAD(+) + (deoxyribonucleotide)n-3'-hydroxyl + 5'-phospho-(deoxyribonucleotide)m = (deoxyribonucleotide)n+m + AMP + beta-nicotinamide D-nucleotide.. Functionally, DNA ligase that catalyzes the formation of phosphodiester linkages between 5'-phosphoryl and 3'-hydroxyl groups in double-stranded DNA using NAD as a coenzyme and as the energy source for the reaction. It is essential for DNA replication and repair of damaged DNA. In Vibrio parahaemolyticus serotype O3:K6 (strain RIMD 2210633), this protein is DNA ligase.